We begin with the raw amino-acid sequence, 219 residues long: MSNQKALVIFSGGQDSTTCLIQAIQTYGRENVQAITFRYGQRHAVELERAEWIAQDLGVSQTVLDLSLMRQITHNALMDETAAIETADNGVPNTFVDGRNALFLLYAAIFAKGQGIRHIIAGVCETDFSGYPDCRGVFVKSMNVTLNLAMDYDFQIHTPLMYLTKAQTWALADEMGVLDYIREQTHTCYKGIVGGCRECPSCILRERGLAECLESKKAV.

10-20 (FSGGQDSTTCL) lines the ATP pocket. Zn(2+)-binding residues include Cys-188, Cys-196, Cys-199, and Cys-202.

Belongs to the QueC family. Requires Zn(2+) as cofactor.

It carries out the reaction 7-carboxy-7-deazaguanine + NH4(+) + ATP = 7-cyano-7-deazaguanine + ADP + phosphate + H2O + H(+). It participates in purine metabolism; 7-cyano-7-deazaguanine biosynthesis. In terms of biological role, catalyzes the ATP-dependent conversion of 7-carboxy-7-deazaguanine (CDG) to 7-cyano-7-deazaguanine (preQ(0)). The chain is 7-cyano-7-deazaguanine synthase from Neisseria gonorrhoeae (strain NCCP11945).